The sequence spans 636 residues: uncharacterized protein (636 aa).

This is an uncharacterized protein from Bacillus subtilis (strain 168).